The primary structure comprises 232 residues: Very-long-chain (3R)-3-hydroxyacyl-CoA dehydratase 4 (232 aa).

Residues 1-19 (MGPLALPAWLQPRYRKNAY) lie on the Cytoplasmic side of the membrane. Residues 20-40 (LFIYYLIQFCGHSWIFTNMTV) form a helical membrane-spanning segment. The Lumenal segment spans residues 41-56 (RFFSFGKDSMVDTFYA). The chain crosses the membrane as a helical span at residues 57 to 77 (IGLVMRLCQSVSLLELLHIYV). The Cytoplasmic portion of the chain corresponds to 78-112 (GIESNHLLPRFLQLTERIIILFVVITSQEEVQEKY). The chain crosses the membrane as a helical span at residues 113-133 (VVCVLFVFWNLLDMVRYTYSM). Residues 134–135 (LS) lie on the Lumenal side of the membrane. The helical transmembrane segment at 136–156 (VIGISYAVLTWLSQTLWMPIY) threads the bilayer. Tyr-156 is an active-site residue. Position 157 (Pro-157) is a topological domain, cytoplasmic. Residues 158-178 (LCVLAEAFAIYQSLPYFESFG) form a helical membrane-spanning segment. Residue Glu-163 is part of the active site. The Lumenal portion of the chain corresponds to 179-189 (TYSTKLPFDLS). A helical transmembrane segment spans residues 190–210 (IYFPYVLKIYLMMLFIGMYFT). Topologically, residues 211-232 (YSHLYSERRDILGIFPIKKKKM) are cytoplasmic.

It belongs to the very long-chain fatty acids dehydratase HACD family. May interact with enzymes of the ELO family (including ELOVL1); with those enzymes that mediate condensation, the first of the four steps of the reaction cycle responsible for fatty acids elongation, may be part of a larger fatty acids elongase complex. As to expression, highly expressed in leukocytes, and low expression in heart, spleen, kidney, and placenta.

It localises to the endoplasmic reticulum membrane. It catalyses the reaction a very-long-chain (3R)-3-hydroxyacyl-CoA = a very-long-chain (2E)-enoyl-CoA + H2O. The enzyme catalyses (3R)-hydroxyhexadecanoyl-CoA = (2E)-hexadecenoyl-CoA + H2O. Its pathway is lipid metabolism; fatty acid biosynthesis. In terms of biological role, catalyzes the third of the four reactions of the long-chain fatty acids elongation cycle. This endoplasmic reticulum-bound enzymatic process, allows the addition of two carbons to the chain of long- and very long-chain fatty acids/VLCFAs per cycle. This enzyme catalyzes the dehydration of the 3-hydroxyacyl-CoA intermediate into trans-2,3-enoyl-CoA, within each cycle of fatty acid elongation. Thereby, it participates in the production of VLCFAs of different chain lengths that are involved in multiple biological processes as precursors of membrane lipids and lipid mediators. In Homo sapiens (Human), this protein is Very-long-chain (3R)-3-hydroxyacyl-CoA dehydratase 4.